The following is a 332-amino-acid chain: Fructose-1,6-bisphosphatase class 1 (332 aa).

Glutamate 89, aspartate 110, leucine 112, and aspartate 113 together coordinate Mg(2+). Substrate contacts are provided by residues 113 to 116 (DGSS), asparagine 206, tyrosine 239, 257 to 259 (YLY), and lysine 269. Residue glutamate 275 coordinates Mg(2+).

Belongs to the FBPase class 1 family. Homotetramer. Requires Mg(2+) as cofactor.

The protein localises to the cytoplasm. It catalyses the reaction beta-D-fructose 1,6-bisphosphate + H2O = beta-D-fructose 6-phosphate + phosphate. It functions in the pathway carbohydrate biosynthesis; gluconeogenesis. The polypeptide is Fructose-1,6-bisphosphatase class 1 (Citrobacter koseri (strain ATCC BAA-895 / CDC 4225-83 / SGSC4696)).